The sequence spans 215 residues: Probable transaldolase (215 aa).

K83 acts as the Schiff-base intermediate with substrate in catalysis.

Belongs to the transaldolase family. Type 3B subfamily.

It is found in the cytoplasm. The catalysed reaction is D-sedoheptulose 7-phosphate + D-glyceraldehyde 3-phosphate = D-erythrose 4-phosphate + beta-D-fructose 6-phosphate. The protein operates within carbohydrate degradation; pentose phosphate pathway; D-glyceraldehyde 3-phosphate and beta-D-fructose 6-phosphate from D-ribose 5-phosphate and D-xylulose 5-phosphate (non-oxidative stage): step 2/3. Transaldolase is important for the balance of metabolites in the pentose-phosphate pathway. In Anaeromyxobacter sp. (strain Fw109-5), this protein is Probable transaldolase.